Reading from the N-terminus, the 310-residue chain is 3,5-dioxohexanoate:acetyl-CoA acetone transferase (310 aa).

The Zn(2+) site is built by His-49, His-51, and Glu-258.

Belongs to the BKACE family. Zn(2+) is required as a cofactor.

The catalysed reaction is 3,5-dioxohexanoate + acetyl-CoA = acetoacetyl-CoA + acetoacetate. Catalyzes the condensation of 3,5-dioxohexanoate and acetyl-CoA, forming acetoacetate and acetoacetyl-CoA. May be involved in fatty acid biosynthesis rescue via triacetic acid lactone. The chain is 3,5-dioxohexanoate:acetyl-CoA acetone transferase from Paraburkholderia graminis (strain ATCC 700544 / DSM 17151 / LMG 18924 / NCIMB 13744 / C4D1M).